The chain runs to 499 residues: uncharacterized protein (499 aa).

Transmembrane regions (helical) follow at residues 51–71 (LLFR…LVAF), 98–118 (IIAS…TLLM), 127–147 (LAFI…CHNF), 155–175 (LVLG…LTMI), 187–207 (YLFA…YAVL), 220–240 (WLFI…YFII), 301–321 (CLYG…YTSL), 325–345 (YMTI…SFLS), 352–372 (GIIL…LLAC), 378–398 (VLYF…GLNV), 412–432 (ATAI…AGQI), and 444–464 (LTSL…IFFL).

It belongs to the major facilitator superfamily. Allantoate permease family.

It is found in the golgi apparatus. Its subcellular location is the membrane. This is an uncharacterized protein from Schizosaccharomyces pombe (strain 972 / ATCC 24843) (Fission yeast).